A 608-amino-acid polypeptide reads, in one-letter code: Aspartate--tRNA(Asp/Asn) ligase (608 aa).

E175 provides a ligand contact to L-aspartate. The aspartate stretch occupies residues 199 to 202; it reads QLFK. R221 lines the L-aspartate pocket. ATP contacts are provided by residues 221 to 223 and Q230; that span reads RDE. H453 lines the L-aspartate pocket. E487 provides a ligand contact to ATP. R494 contacts L-aspartate. An ATP-binding site is contributed by 539-542; the sequence is GWDR. The disordered stretch occupies residues 566-608; that stretch reads IDPLTDAPAAITPQQRKEAGIDAKPKPKAEAQAEAQAEESAEK. Basic and acidic residues predominate over residues 580–596; it reads QRKEAGIDAKPKPKAEA.

Belongs to the class-II aminoacyl-tRNA synthetase family. Type 1 subfamily. As to quaternary structure, homodimer.

Its subcellular location is the cytoplasm. The catalysed reaction is tRNA(Asx) + L-aspartate + ATP = L-aspartyl-tRNA(Asx) + AMP + diphosphate. Aspartyl-tRNA synthetase with relaxed tRNA specificity since it is able to aspartylate not only its cognate tRNA(Asp) but also tRNA(Asn). Reaction proceeds in two steps: L-aspartate is first activated by ATP to form Asp-AMP and then transferred to the acceptor end of tRNA(Asp/Asn). This chain is Aspartate--tRNA(Asp/Asn) ligase, found in Corynebacterium glutamicum (strain R).